The primary structure comprises 368 residues: 2-aminoethylphosphonate--pyruvate transaminase (368 aa).

K192 is modified (N6-(pyridoxal phosphate)lysine).

It belongs to the class-V pyridoxal-phosphate-dependent aminotransferase family. PhnW subfamily. In terms of assembly, homodimer. The cofactor is pyridoxal 5'-phosphate.

It catalyses the reaction (2-aminoethyl)phosphonate + pyruvate = phosphonoacetaldehyde + L-alanine. Involved in phosphonate degradation. In Pseudomonas putida (strain GB-1), this protein is 2-aminoethylphosphonate--pyruvate transaminase.